The chain runs to 248 residues: 2,3-bisphosphoglycerate-dependent phosphoglycerate mutase (248 aa).

Substrate-binding positions include 10–17, 23–24, arginine 62, 89–92, lysine 100, 116–117, and 183–184; these read RHGQSEWN, TG, ERHY, RR, and GN. Histidine 11 acts as the Tele-phosphohistidine intermediate in catalysis. The active-site Proton donor/acceptor is glutamate 89.

This sequence belongs to the phosphoglycerate mutase family. BPG-dependent PGAM subfamily.

The enzyme catalyses (2R)-2-phosphoglycerate = (2R)-3-phosphoglycerate. It participates in carbohydrate degradation; glycolysis; pyruvate from D-glyceraldehyde 3-phosphate: step 3/5. In terms of biological role, catalyzes the interconversion of 2-phosphoglycerate and 3-phosphoglycerate. In Corynebacterium glutamicum (strain ATCC 13032 / DSM 20300 / JCM 1318 / BCRC 11384 / CCUG 27702 / LMG 3730 / NBRC 12168 / NCIMB 10025 / NRRL B-2784 / 534), this protein is 2,3-bisphosphoglycerate-dependent phosphoglycerate mutase.